Reading from the N-terminus, the 178-residue chain is Inorganic pyrophosphatase (178 aa).

Substrate contacts are provided by Lys30, Arg44, and Tyr56. 3 residues coordinate Mg(2+): Asp66, Asp71, and Asp103. Tyr142 is a substrate binding site.

It belongs to the PPase family. In terms of assembly, homohexamer. Requires Mg(2+) as cofactor.

It is found in the cytoplasm. It carries out the reaction diphosphate + H2O = 2 phosphate + H(+). In terms of biological role, catalyzes the hydrolysis of inorganic pyrophosphate (PPi) forming two phosphate ions. This Xylella fastidiosa (strain 9a5c) protein is Inorganic pyrophosphatase.